A 215-amino-acid chain; its full sequence is MTSSADRSPVEAMVSHAEGAISEDDIVAAARERAVDLGAGPVTPAVGALLSVFARLSGGKAVVEVGTGAGVSGLWLLSGMREDGVLTTIDVEPEHQRSAKQAFSEASIAPSRTRLIGGRAQEVLPRLADESYDLLVIDAAPADQPDFLAGGIRLLRPGGAVVIHGASAGGRAGDPSANDPDVVGVREAARIIADDGRFTAVLIPLGDGLLAATRD.

Residues valine 42, glutamate 64, 66 to 67 (GT), serine 72, aspartate 90, and valine 91 each bind S-adenosyl-L-methionine. Substrate is bound at residue aspartate 138.

It belongs to the class I-like SAM-binding methyltransferase superfamily. Cation-dependent O-methyltransferase family.

The protein is Putative O-methyltransferase MAB_1361c of Mycobacteroides abscessus (strain ATCC 19977 / DSM 44196 / CCUG 20993 / CIP 104536 / JCM 13569 / NCTC 13031 / TMC 1543 / L948) (Mycobacterium abscessus).